We begin with the raw amino-acid sequence, 107 residues long: High mobility group protein HMG-I/HMG-Y (107 aa).

The span at 1–13 shows a compositional bias: polar residues; the sequence is MSESGSKSSQPLA. Positions 1–107 are disordered; sequence MSESGSKSSQ…ISQESSEEEQ (107 aa). At S2 the chain carries N-acetylserine. K7 carries the post-translational modification N6-acetyllysine. S8 carries the ADP-ribosylserine modification. The residue at position 9 (S9) is an ADP-ribosylserine; alternate. S9 carries the post-translational modification Phosphoserine; alternate. K15 bears the N6-acetyllysine; alternate mark. K15 is covalently cross-linked (Glycyl lysine isopeptide (Lys-Gly) (interchain with G-Cter in SUMO2); alternate). Positions 15–24 are enriched in basic and acidic residues; the sequence is KQEKDGTEKR. A DNA-binding region (a.T hook 1) is located at residues 21-31; sequence TEKRGRGRPRK. R26 bears the Asymmetric dimethylarginine; alternate mark. Residue R26 is modified to Omega-N-methylarginine; alternate. R26 is modified (symmetric dimethylarginine; alternate). Phosphoserine; by HIPK2 and CDC2 is present on S36. The residue at position 39 (T39) is a Phosphothreonine. S44 and S49 each carry phosphoserine. Phosphothreonine; by HIPK2 and CDC2 is present on T53. DNA-binding regions (a.T hook) lie at residues 53 to 63 and 78 to 89; these read TPKRPRGRPKG and APGRKPRGRPKK. Positions 53–77 are interaction with HIPK2; that stretch reads TPKRPRGRPKGSKNKGAAKTRKVTT. A compositionally biased stretch (basic residues) spans 55–74; it reads KRPRGRPKGSKNKGAAKTRK. 2 positions are modified to asymmetric dimethylarginine; by PRMT6; alternate: R58 and R60. Residues R58 and R60 each carry the omega-N-methylarginine; by PRMT6; alternate modification. Positions 93–107 are enriched in acidic residues; the sequence is EEEEGISQESSEEEQ. Phosphoserine is present on residues S99, S102, and S103.

Belongs to the HMGA family. In terms of assembly, interacts with HIPK2. Isoforms HMG-I and HMG-Y can be phosphorylated by HIPK2. Phosphorylation may modulate DNA-binding affinity. In terms of processing, methylation at Arg-58 is mutually exclusive with methylation at Arg-60.

The protein localises to the nucleus. It localises to the chromosome. Its function is as follows. HMG-I/Y bind preferentially to the minor groove of A+T rich regions in double-stranded DNA. It is suggested that these proteins could function in nucleosome phasing and in the 3'-end processing of mRNA transcripts. They are also involved in the transcription regulation of genes containing, or in close proximity to A+T-rich regions. This Mus musculus (Mouse) protein is High mobility group protein HMG-I/HMG-Y (Hmga1).